The sequence spans 507 residues: 3-[(3aS,4S,7aS)-7a-methyl-1,5-dioxo-octahydro-1H-inden-4-yl]propanoyl:CoA ligase (507 aa).

ATP contacts are provided by residues threonine 177–lysine 185, aspartate 391, arginine 406, and lysine 497.

The protein belongs to the ATP-dependent AMP-binding enzyme family.

The catalysed reaction is 3-[(3aS,4S,7aS)-7a-methyl-1,5-dioxo-octahydro-1H-inden-4-yl]propanoate + ATP + CoA = 3-[(3aS,4S,7aS)-7a-methyl-1,5-dioxo-octahydro-1H-inden-4-yl]propanoyl-CoA + AMP + diphosphate. It catalyses the reaction 5-hydroxy-3-[(3aS,4S,5R,7aS)-7a-methyl-1,5-dioxo-octahydro-1H-inden-4-yl]propanoate + ATP + CoA = 3-[(3aS,4S,5R,7aS)-5-hydroxy-7a-methyl-1-oxo-octahydro-1H-inden-4-yl]propanoyl-CoA + AMP + diphosphate. In terms of biological role, involved in the catabolism of the rings C and D of cholesterol. Catalyzes the ATP-dependent CoA thioesterification of 3aalpha-H-4alpha(3'-propanoate)-7abeta-methylhexahydro-1,5-indanedione (HIP) to yield HIP-CoA. It can also use the hydroxylated analogs of HIP, 5alpha-OH HIP and 1beta-OH HIP. It requires that the side chain at C17 is completely removed. The protein is 3-[(3aS,4S,7aS)-7a-methyl-1,5-dioxo-octahydro-1H-inden-4-yl]propanoyl:CoA ligase of Mycobacterium tuberculosis (strain ATCC 25618 / H37Rv).